We begin with the raw amino-acid sequence, 456 residues long: Glycerol-3-phosphate dehydrogenase [NAD(+)] At3g07690, cytosolic (456 aa).

NAD(+)-binding positions include 41–46 (GAGAWG), K189, and A228. K189 contacts substrate. The active-site Proton acceptor is K278. The NAD(+) site is built by R340 and Q368. 340–341 (RN) serves as a coordination point for substrate.

Belongs to the NAD-dependent glycerol-3-phosphate dehydrogenase family. As to quaternary structure, homodimer.

It localises to the cytoplasm. It catalyses the reaction sn-glycerol 3-phosphate + NAD(+) = dihydroxyacetone phosphate + NADH + H(+). In terms of biological role, required for glycerol-3-phosphate (G3P) accumulation during systemic acquired resistance (SAR) establishment. This chain is Glycerol-3-phosphate dehydrogenase [NAD(+)] At3g07690, cytosolic, found in Arabidopsis thaliana (Mouse-ear cress).